A 95-amino-acid chain; its full sequence is Small ribosomal subunit protein bS16 (95 aa).

Belongs to the bacterial ribosomal protein bS16 family.

The polypeptide is Small ribosomal subunit protein bS16 (Roseiflexus sp. (strain RS-1)).